Reading from the N-terminus, the 397-residue chain is uncharacterized protein (397 aa).

12 helical membrane-spanning segments follow: residues Leu5–Leu25, Leu43–Phe63, Phe69–Phe89, Trp92–Ala112, Ala131–Ala151, Tyr157–Phe177, Phe202–Trp222, Ile233–Leu253, Leu269–Thr289, Phe293–Ala313, Phe333–Val353, and Ala360–Asp380.

It belongs to the major facilitator superfamily.

The protein localises to the cell membrane. This is an uncharacterized protein from Bacillus subtilis (strain 168).